The following is a 99-amino-acid chain: Large ribosomal subunit protein eL21 (99 aa).

Residues 1–18 are compositionally biased toward basic residues; the sequence is MVKHSRGNRTRSRKLLKK. A disordered region spans residues 1–26; sequence MVKHSRGNRTRSRKLLKKSPRERGAV.

It belongs to the eukaryotic ribosomal protein eL21 family.

The sequence is that of Large ribosomal subunit protein eL21 from Metallosphaera sedula (strain ATCC 51363 / DSM 5348 / JCM 9185 / NBRC 15509 / TH2).